A 712-amino-acid chain; its full sequence is Ribosomal RNA large subunit methyltransferase K/L (712 aa).

The region spanning 43 to 154 (TAYRCCLWTR…GEKGVLGLDM (112 aa)) is the THUMP domain.

The protein belongs to the methyltransferase superfamily. RlmKL family.

Its subcellular location is the cytoplasm. It catalyses the reaction guanosine(2445) in 23S rRNA + S-adenosyl-L-methionine = N(2)-methylguanosine(2445) in 23S rRNA + S-adenosyl-L-homocysteine + H(+). The enzyme catalyses guanosine(2069) in 23S rRNA + S-adenosyl-L-methionine = N(2)-methylguanosine(2069) in 23S rRNA + S-adenosyl-L-homocysteine + H(+). In terms of biological role, specifically methylates the guanine in position 2445 (m2G2445) and the guanine in position 2069 (m7G2069) of 23S rRNA. The polypeptide is Ribosomal RNA large subunit methyltransferase K/L (Photobacterium profundum (strain SS9)).